Here is a 208-residue protein sequence, read N- to C-terminus: Probable GTP-binding protein EngB (208 aa).

Residues 29-203 (EGREVAFAGR…WDKLGEWLGI (175 aa)) form the EngB-type G domain. Residues 37–44 (GRSNAGKS), 64–68 (GRTQL), 82–85 (DLPG), 149–152 (TKAD), and 182–184 (FSA) each bind GTP. Serine 44 and threonine 66 together coordinate Mg(2+).

This sequence belongs to the TRAFAC class TrmE-Era-EngA-EngB-Septin-like GTPase superfamily. EngB GTPase family. Mg(2+) is required as a cofactor.

Necessary for normal cell division and for the maintenance of normal septation. This chain is Probable GTP-binding protein EngB, found in Alcanivorax borkumensis (strain ATCC 700651 / DSM 11573 / NCIMB 13689 / SK2).